Reading from the N-terminus, the 110-residue chain is Large ribosomal subunit protein P1 (110 aa).

The interval P87–D110 is disordered.

It belongs to the eukaryotic ribosomal protein P1/P2 family. P1 and P2 exist as dimers at the large ribosomal subunit. Post-translationally, phosphorylated.

In terms of biological role, plays an important role in the elongation step of protein synthesis. The polypeptide is Large ribosomal subunit protein P1 (ALTA12) (Alternaria alternata (Alternaria rot fungus)).